The primary structure comprises 174 residues: Transmembrane protein 208 (174 aa).

3 helical membrane passes run 30–50 (NMAIGCAAPALLLSFLVFEVT), 54–74 (VFMHILSLLILGSSYQFMAFM), and 111–131 (GTLLLALISNYFWLVLLLAPI). The disordered stretch occupies residues 151 to 174 (AQDDNPQVDEKKQKKMDRRMRRMR). Basic residues predominate over residues 163-174 (QKKMDRRMRRMR).

This sequence belongs to the TMEM208 family. In terms of assembly, interacts with fz. As to expression, expressed in the brain.

It localises to the endoplasmic reticulum membrane. Functionally, may play an important role during development and helps to maintain proper levels of Fz. The sequence is that of Transmembrane protein 208 from Drosophila melanogaster (Fruit fly).